The chain runs to 157 residues: Transcription elongation factor GreA (157 aa).

This sequence belongs to the GreA/GreB family.

In terms of biological role, necessary for efficient RNA polymerase transcription elongation past template-encoded arresting sites. The arresting sites in DNA have the property of trapping a certain fraction of elongating RNA polymerases that pass through, resulting in locked ternary complexes. Cleavage of the nascent transcript by cleavage factors such as GreA or GreB allows the resumption of elongation from the new 3'terminus. GreA releases sequences of 2 to 3 nucleotides. The protein is Transcription elongation factor GreA of Phenylobacterium zucineum (strain HLK1).